The sequence spans 292 residues: Elongation factor Ts (292 aa).

The tract at residues 80-83 (TDFV) is involved in Mg(2+) ion dislocation from EF-Tu.

It belongs to the EF-Ts family.

The protein resides in the cytoplasm. Functionally, associates with the EF-Tu.GDP complex and induces the exchange of GDP to GTP. It remains bound to the aminoacyl-tRNA.EF-Tu.GTP complex up to the GTP hydrolysis stage on the ribosome. In Cupriavidus necator (strain ATCC 17699 / DSM 428 / KCTC 22496 / NCIMB 10442 / H16 / Stanier 337) (Ralstonia eutropha), this protein is Elongation factor Ts.